The chain runs to 370 residues: DNA primase large subunit PriL (370 aa).

Residues Cys230, Cys301, Cys310, and Cys317 each contribute to the [4Fe-4S] cluster site. The segment at 337-370 (EGEEAQGKEQGKEKDDGKEKENGKESEVKKKKEK) is disordered.

The protein belongs to the eukaryotic-type primase large subunit family. In terms of assembly, heterodimer of a small subunit (PriS) and a large subunit (PriL). [4Fe-4S] cluster serves as cofactor.

In terms of biological role, regulatory subunit of DNA primase, an RNA polymerase that catalyzes the synthesis of short RNA molecules used as primers for DNA polymerase during DNA replication. Stabilizes and modulates the activity of the small subunit, increasing the rate of DNA synthesis, and conferring RNA synthesis capability. The DNA polymerase activity may enable DNA primase to also catalyze primer extension after primer synthesis. May also play a role in DNA repair. The sequence is that of DNA primase large subunit PriL from Methanosarcina mazei (strain ATCC BAA-159 / DSM 3647 / Goe1 / Go1 / JCM 11833 / OCM 88) (Methanosarcina frisia).